Here is a 266-residue protein sequence, read N- to C-terminus: UPF0294 protein YafD (266 aa).

It belongs to the UPF0294 family.

The protein localises to the cytoplasm. This is UPF0294 protein YafD from Salmonella newport (strain SL254).